We begin with the raw amino-acid sequence, 589 residues long: MMRGVLVIMRLLCLGMLFTGCAGVPNSSAPQAIGTVERPVPSNLPKPTPGMDPDVLLREFFKATADPANRHLAARQFLTQSASNAWDDAGRALLIDHVVFVETRGAERVSATMRADILGSLSDMGVFETAEGVLPDPGPVELIKTSGGWRIDRLPNGVFLDWQQFQATYKRNTLYFADPTGKTVVPDPRYVAVLGHDQLATELVSKLLAGPRPEMAHAVRNLLAPPLRLRGPVTRADGSKSGIGRGYGGARIDLEKLSTTDPHSRQLLAAQIIWTLARADIRGPYVINADGAPLDDRFADGWTTSDVAATDPGVADGAGAGLHALVGGALVSLIGQNTTTVLGAFGRMGYQTGAALSRSGRQVASVVTLRRGAPDMAASLWIGDLGGEAVQSADGHSLSRPSWSLDDAVWVVVDTNNVLRAIPEPASGQPARIPVDSAAVASRFPGPITDLQLSRDGTRAAMVIGGQVILAGVEQTQAGQFALTYPRRLGFGLGSSVVSLSWRTGDDIVVTRTDATHPVSYVNLDGVNSDAPARGLQVPLSVIAANPSTVYVAGPQGVLQYSASVAESQQGWSEVAGLTVMGAEPVLPG.

An N-terminal signal peptide occupies residues methionine 1–glycine 20. Cysteine 21 carries the N-palmitoyl cysteine lipid modification. The S-diacylglycerol cysteine moiety is linked to residue cysteine 21.

The protein belongs to the LpqB lipoprotein family.

The protein localises to the cell membrane. The chain is Lipoprotein LpqB from Mycobacterium leprae (strain TN).